Here is a 93-residue protein sequence, read N- to C-terminus: Small ribosomal subunit protein uS19c (93 aa).

The protein belongs to the universal ribosomal protein uS19 family.

The protein localises to the plastid. The protein resides in the chloroplast. Its function is as follows. Protein S19 forms a complex with S13 that binds strongly to the 16S ribosomal RNA. The polypeptide is Small ribosomal subunit protein uS19c (Zygnema circumcarinatum (Green alga)).